Reading from the N-terminus, the 459-residue chain is MGINNPIPRSLKSETKKAAKILASFVKPNQVFGADQVIPPDVLKRAKGLAIITILKAGFLFSGRAGSGVIVARLKDGTWSAPSAIAMAGAGAGGMVGIELTDFVFILNTQDAVKSFSEFGTITLGGNVSVSAGPLGRSAEAAASASAGGVAAVFAYSKSKGLFAGVSVEGSAIIERREANRKFYGDNCTAKMILSGRIRPPPAVDPLFRVLESRAFNYRPSNGGRGSFDDDEDDYYDDDDYYNDIPSSFSSTDASSTRPNTRSTRRRAQSGSRYTFDDDDDDDDYGTGYSRNSRLAPTNSGGSGGKLDDPSGASSYYASHRRSGTAQSRARSSRNRWADDEYDDYDDDYESGYRRGNGRDRTKDREVDDLSNRFSKSRISSASTPQTSQGRFTAPTSPSTSSPKAVALYSFAGEESGDLPFRKGDVITILKKSDSQNDWWTGRVNGREGIFPANYVELV.

Positions 219–403 (RPSNGGRGSF…APTSPSTSSP (185 aa)) are disordered. At serine 227 the chain carries Phosphoserine. Residues 229 to 242 (DDDEDDYYDDDDYY) show a composition bias toward acidic residues. A compositionally biased stretch (low complexity) spans 243–262 (NDIPSSFSSTDASSTRPNTR). Positions 289–300 (YSRNSRLAPTNS) are enriched in polar residues. At threonine 298 the chain carries Phosphothreonine. Serine 300 and serine 303 each carry phosphoserine. The span at 340 to 350 (DEYDDYDDDYE) shows a compositional bias: acidic residues. The span at 351 to 371 (SGYRRGNGRDRTKDREVDDLS) shows a compositional bias: basic and acidic residues. A compositionally biased stretch (polar residues) spans 372-391 (NRFSKSRISSASTPQTSQGR). Threonine 393 is subject to Phosphothreonine. Positions 393–403 (TAPTSPSTSSP) are enriched in low complexity. Phosphoserine is present on residues serine 397, serine 402, and serine 416. Residues 400–459 (TSSPKAVALYSFAGEESGDLPFRKGDVITILKKSDSQNDWWTGRVNGREGIFPANYVELV) enclose the SH3 domain.

This sequence belongs to the SH3YL1 family. As to quaternary structure, interacts with LAS17. Phosphorylation of Ser-397 is induced 2-fold in response to mating pheromone.

The protein localises to the cytoplasm. The chain is LAS seventeen-binding protein 3 (LSB3) from Saccharomyces cerevisiae (strain YJM789) (Baker's yeast).